The primary structure comprises 685 residues: Heat shock protein homolog SSE1 (685 aa).

The tract at residues 651-685 (QALRSNQEASKMADLSAKLAAQRKAEAEAKENAKE) is disordered. The segment covering 673–685 (RKAEAEAKENAKE) has biased composition (basic and acidic residues).

Belongs to the heat shock protein 70 family.

The protein resides in the cytoplasm. The sequence is that of Heat shock protein homolog SSE1 (SSE1) from Naumovozyma castellii (Yeast).